We begin with the raw amino-acid sequence, 159 residues long: Ribosome-binding factor A (159 aa).

A disordered region spans residues 127 to 159; the sequence is TYAGEADPYRRPAVDDAGDSADDADPAEDERPS. Acidic residues predominate over residues 142–159; it reads DAGDSADDADPAEDERPS.

The protein belongs to the RbfA family. Monomer. Binds 30S ribosomal subunits, but not 50S ribosomal subunits or 70S ribosomes.

Its subcellular location is the cytoplasm. One of several proteins that assist in the late maturation steps of the functional core of the 30S ribosomal subunit. Associates with free 30S ribosomal subunits (but not with 30S subunits that are part of 70S ribosomes or polysomes). Required for efficient processing of 16S rRNA. May interact with the 5'-terminal helix region of 16S rRNA. In Beutenbergia cavernae (strain ATCC BAA-8 / DSM 12333 / CCUG 43141 / JCM 11478 / NBRC 16432 / NCIMB 13614 / HKI 0122), this protein is Ribosome-binding factor A.